We begin with the raw amino-acid sequence, 1270 residues long: Myosin-binding protein C, cardiac-type (1270 aa).

Methionine 1 carries the post-translational modification N-acetylmethionine. Positions 1–24 (MPEPGKKPVSAFNKKPRSAEVTAG) are disordered. A phosphoserine mark is found at serine 47 and serine 72. Positions 94–105 (VTEPAPPEKAES) are enriched in basic and acidic residues. A disordered region spans residues 94–152 (VTEPAPPEKAESEVAPGAPEEVPAPATELEESVSSPEGSVSVTQDGSAAEHQGAPDDPI). Positions 106–135 (EVAPGAPEEVPAPATELEESVSSPEGSVSV) are enriched in low complexity. Residues 151–254 (PIGLFLMRPQ…FDSCNFNLTV (104 aa)) form the Ig-like C2-type 1 domain. Glutamine 206, histidine 208, glutamate 221, and histidine 223 together coordinate Zn(2+). Serine 273, serine 282, and serine 302 each carry phosphoserine; by PKA and PKC. 2 positions are modified to phosphoserine: serine 307 and serine 423. 4 consecutive Ig-like C2-type domains span residues 358-448 (STAF…VKEP), 449-539 (PVLI…VQEK), 540-629 (KLEV…HFME), and 641-767 (PKIH…VIDV). A disulfide bond links cysteine 432 and cysteine 439. Serine 455 and serine 546 each carry phosphoserine. Threonine 603 carries the post-translational modification Phosphothreonine. Residues 683–702 (VTQGKKASAGPHPDAPEDAG) are disordered. Fibronectin type-III domains lie at 770-866 (APAA…IGPP) and 868-963 (EPTH…VQEI). The region spanning 967-1061 (PRLQLPRHLR…ATLILQIVDK (95 aa)) is the Ig-like C2-type 6 domain. Residues 1064 to 1159 (PPQDIRIVET…TKEPVFIPRP (96 aa)) form the Fibronectin type-III 3 domain. The Ig-like C2-type 7 domain maps to 1177–1270 (PSFTQPLANR…ECRLEVRVPQ (94 aa)). Arginine 1237 is modified (omega-N-methylarginine).

Belongs to the immunoglobulin superfamily. MyBP family. Post-translationally, substrate for phosphorylation by PKA and PKC. Reversible phosphorylation appears to modulate contraction. Polyubiquitinated.

Functionally, thick filament-associated protein located in the crossbridge region of vertebrate striated muscle a bands. In vitro it binds MHC, F-actin and native thin filaments, and modifies the activity of actin-activated myosin ATPase. It may modulate muscle contraction or may play a more structural role. The polypeptide is Myosin-binding protein C, cardiac-type (Mybpc3) (Mus musculus (Mouse)).